The following is a 397-amino-acid chain: Phosphoglycerate kinase (397 aa).

Residues 21-23, Arg-37, 60-63, Arg-119, and Arg-152 contribute to the substrate site; these read DFN and HLGR. ATP contacts are provided by residues Lys-203, Gly-294, Glu-325, and 354-357; that span reads GGDS.

It belongs to the phosphoglycerate kinase family. As to quaternary structure, monomer.

Its subcellular location is the cytoplasm. It catalyses the reaction (2R)-3-phosphoglycerate + ATP = (2R)-3-phospho-glyceroyl phosphate + ADP. The protein operates within carbohydrate degradation; glycolysis; pyruvate from D-glyceraldehyde 3-phosphate: step 2/5. The chain is Phosphoglycerate kinase from Chlorobium phaeovibrioides (strain DSM 265 / 1930) (Prosthecochloris vibrioformis (strain DSM 265)).